The sequence spans 163 residues: Shikimate kinase (163 aa).

10–15 serves as a coordination point for ATP; sequence GVGKTT. Threonine 14 contributes to the Mg(2+) binding site. Aspartate 28, arginine 52, and glycine 75 together coordinate substrate. Position 116 (arginine 116) interacts with ATP. Arginine 134 serves as a coordination point for substrate. ATP is bound at residue arginine 151.

This sequence belongs to the shikimate kinase family. As to quaternary structure, monomer. Mg(2+) is required as a cofactor.

The protein localises to the cytoplasm. The catalysed reaction is shikimate + ATP = 3-phosphoshikimate + ADP + H(+). Its pathway is metabolic intermediate biosynthesis; chorismate biosynthesis; chorismate from D-erythrose 4-phosphate and phosphoenolpyruvate: step 5/7. Functionally, catalyzes the specific phosphorylation of the 3-hydroxyl group of shikimic acid using ATP as a cosubstrate. The polypeptide is Shikimate kinase (Streptococcus pyogenes serotype M4 (strain MGAS10750)).